A 74-amino-acid polypeptide reads, in one-letter code: Antimicrobial peptide ToAp1 (74 aa).

A signal peptide spans 1 to 22 (MQMKYLIPIFFLVLIVADHCHA). Lysine amide is present on Lys-39. The propeptide occupies 40–74 (GRRKRDITAQIEQYRNIQKREAAELEELLANLPVY).

Belongs to the non-disulfide-bridged peptide (NDBP) superfamily. Short antimicrobial peptide (group 4) family. In terms of tissue distribution, expressed by the venom gland.

It localises to the secreted. Antimicrobial peptide. Is able to kill Mycobacterium abscessus subsp. massiliense in a dose-dependent manner. Has antifungal activity against Candida spp. and one Cryptococcus neoformans strains with MICs values ranging from 12.5 to 200 uM. Also shows an inhibitory activity on C.albicans biofilms at high concentrations. Shows low cytotoxic activity and has weak hemolytic activity on human erythrocytes. Shows anti-inflammatory activities, since it decreases release of pro-inflammatory cytokines, and increases release of anti-inflammatory cytokines. Acts by blocking the Toll-like receptor 4 (TLR4). In addition, decreases the expression of costimulatory molecules such as CD80 and CD86 in LPS-stimulated cells. In vivo, does not induce immune cell migration. Helical wheel projections predict an amphipathic peptide with distinct hydrophobic and hydrophilic faces. The protein is Antimicrobial peptide ToAp1 of Tityus obscurus (Amazonian scorpion).